The sequence spans 131 residues: Small ribosomal subunit protein uS8 (131 aa).

The protein belongs to the universal ribosomal protein uS8 family. As to quaternary structure, part of the 30S ribosomal subunit. Contacts proteins S5 and S12.

In terms of biological role, one of the primary rRNA binding proteins, it binds directly to 16S rRNA central domain where it helps coordinate assembly of the platform of the 30S subunit. The chain is Small ribosomal subunit protein uS8 from Bacteroides thetaiotaomicron (strain ATCC 29148 / DSM 2079 / JCM 5827 / CCUG 10774 / NCTC 10582 / VPI-5482 / E50).